Consider the following 457-residue polypeptide: F-box/LRR-repeat protein At3g62440 (457 aa).

The region spanning 1–49 is the F-box domain; that stretch reads MDRISNLPDEIICHIGSFLSAREAAFTTVLSKRWHNLFTIVPDLHFDSS. 6 LRR repeats span residues 53–79, 147–174, 177–202, 229–254, 283–310, and 337–362; these read GESLTDFVDRVMALPASSRVNKLSLKW, LSLGSGFAIDFLPENALLPALKTLSLYH, FYEFGRCAFKTLLASSPVLEELTVCG, WDAFDDSDFKSISFDTPSLAYLYYSD, WGKGDEKRFNPINLLHGLKNVETLNLYT, and LSNFCWSSMPMLIKKAPNLKTLNIDG.

The sequence is that of F-box/LRR-repeat protein At3g62440 from Arabidopsis thaliana (Mouse-ear cress).